The chain runs to 357 residues: UPF0283 membrane protein HS_0596 (357 aa).

Helical transmembrane passes span 67–87 (LMAT…QWLV), 96–116 (IAFV…GAII), and 213–233 (AVES…MFFI).

It belongs to the UPF0283 family.

Its subcellular location is the cell inner membrane. This is UPF0283 membrane protein HS_0596 from Histophilus somni (strain 129Pt) (Haemophilus somnus).